The following is a 536-amino-acid chain: DEAD-box ATP-dependent RNA helicase 26 (536 aa).

The interval 1-44 is disordered; the sequence is MMSGGPSDATHRKRRRRRGPKGSGVDGPSIPRAVTTNGAGPEEE. Residues 11–20 show a composition bias toward basic residues; sequence HRKRRRRRGP. The Q motif motif lies at 74 to 102; it reads TRFDQCPVSPLSLKAIKDAGYEKMTQVQE. The Helicase ATP-binding domain maps to 105-282; the sequence is LPIILQGEDV…HIAMKRGYKF (178 aa). 118–125 provides a ligand contact to ATP; that stretch reads AKTGTGKT. The DEAD box motif lies at 230–233; sequence DEAD. The region spanning 316-466 is the Helicase C-terminal domain; that stretch reads VLKKHIAEDA…SIQTGVKDAL (151 aa).

Belongs to the DEAD box helicase family.

The catalysed reaction is ATP + H2O = ADP + phosphate + H(+). This is DEAD-box ATP-dependent RNA helicase 26 from Oryza sativa subsp. japonica (Rice).